Here is a 396-residue protein sequence, read N- to C-terminus: Putative carbamoyltransferase YgeW (396 aa).

Carbamoyl phosphate-binding positions include 71–74 (STRT), Q98, 165–168 (HPTQ), and 330–331 (CL).

This sequence belongs to the aspartate/ornithine carbamoyltransferase superfamily. In terms of assembly, homotrimer.

This Escherichia coli O157:H7 protein is Putative carbamoyltransferase YgeW (ygeW).